A 212-amino-acid chain; its full sequence is Large ribosomal subunit protein uL4 (212 aa).

The protein belongs to the universal ribosomal protein uL4 family. Part of the 50S ribosomal subunit.

One of the primary rRNA binding proteins, this protein initially binds near the 5'-end of the 23S rRNA. It is important during the early stages of 50S assembly. It makes multiple contacts with different domains of the 23S rRNA in the assembled 50S subunit and ribosome. In terms of biological role, forms part of the polypeptide exit tunnel. This is Large ribosomal subunit protein uL4 from Caulobacter sp. (strain K31).